A 251-amino-acid polypeptide reads, in one-letter code: Cold shock-induced protein TIR2 (251 aa).

The signal sequence occupies residues 1-18 (MAYIKIALLAAIAALASA). The stretch at 207–225 (ASAISQISDGQVQATSTVS) is one PIR1/2/3 repeat. Glycine 231 is lipidated: GPI-anchor amidated glycine. Residues 232–251 (AAKAVIGMGAGVMAAAAMLL) constitute a propeptide, removed in mature form.

The protein belongs to the SRP1/TIP1 family. The GPI-anchor is attached to the protein in the endoplasmic reticulum and serves to target the protein to the cell surface. There, the glucosamine-inositol phospholipid moiety is cleaved off and the GPI-modified mannoprotein is covalently attached via its lipidless GPI glycan remnant to the 1,6-beta-glucan of the outer cell wall layer. In terms of processing, covalently linked to beta-1,3-glucan of the inner cell wall layer via an alkali-sensitive ester linkage between the gamma-carboxyl group of glutamic acids, arising from a specific glutamine within the PIR1/2/3 repeat, and hydroxyl groups of glucoses of beta-1,3-glucan chains.

It localises to the secreted. It is found in the cell wall. Its subcellular location is the membrane. Its function is as follows. Component of the cell wall. This Saccharomyces cerevisiae (strain ATCC 204508 / S288c) (Baker's yeast) protein is Cold shock-induced protein TIR2 (TIR2).